Consider the following 55-residue polypeptide: UPF0391 membrane protein RALTA_A0099 (55 aa).

A run of 2 helical transmembrane segments spans residues 5–25 and 30–50; these read ALVFFVIALIAAIFGFGGIAA and IAKILFFIFLVVALVAAVMGL.

It belongs to the UPF0391 family.

The protein resides in the cell membrane. The protein is UPF0391 membrane protein RALTA_A0099 of Cupriavidus taiwanensis (strain DSM 17343 / BCRC 17206 / CCUG 44338 / CIP 107171 / LMG 19424 / R1) (Ralstonia taiwanensis (strain LMG 19424)).